We begin with the raw amino-acid sequence, 387 residues long: ATP phosphoribosyltransferase regulatory subunit (387 aa).

It belongs to the class-II aminoacyl-tRNA synthetase family. HisZ subfamily. Heteromultimer composed of HisG and HisZ subunits.

The protein resides in the cytoplasm. It participates in amino-acid biosynthesis; L-histidine biosynthesis; L-histidine from 5-phospho-alpha-D-ribose 1-diphosphate: step 1/9. In terms of biological role, required for the first step of histidine biosynthesis. May allow the feedback regulation of ATP phosphoribosyltransferase activity by histidine. This is ATP phosphoribosyltransferase regulatory subunit from Psychrobacter arcticus (strain DSM 17307 / VKM B-2377 / 273-4).